The following is a 628-amino-acid chain: Glutamyl-tRNA(Gln) amidotransferase subunit E (628 aa).

Belongs to the GatB/GatE family. GatE subfamily. As to quaternary structure, heterodimer of GatD and GatE.

The catalysed reaction is L-glutamyl-tRNA(Gln) + L-glutamine + ATP + H2O = L-glutaminyl-tRNA(Gln) + L-glutamate + ADP + phosphate + H(+). In terms of biological role, allows the formation of correctly charged Gln-tRNA(Gln) through the transamidation of misacylated Glu-tRNA(Gln) in organisms which lack glutaminyl-tRNA synthetase. The reaction takes place in the presence of glutamine and ATP through an activated gamma-phospho-Glu-tRNA(Gln). The GatDE system is specific for glutamate and does not act on aspartate. This chain is Glutamyl-tRNA(Gln) amidotransferase subunit E, found in Pyrococcus furiosus (strain ATCC 43587 / DSM 3638 / JCM 8422 / Vc1).